The sequence spans 366 residues: Heat-inducible transcription repressor HrcA (366 aa).

Residues 298–309 (SSGYGQSSTPSA) show a composition bias toward polar residues. Positions 298-318 (SSGYGQSSTPSANVEHEEYDT) are disordered.

The protein belongs to the HrcA family.

Functionally, negative regulator of class I heat shock genes (grpE-dnaK-dnaJ and groELS operons). Prevents heat-shock induction of these operons. The chain is Heat-inducible transcription repressor HrcA from Bifidobacterium animalis subsp. lactis (strain AD011).